The sequence spans 214 residues: Octanoyltransferase (214 aa).

The BPL/LPL catalytic domain maps to 35–211 (KSNIDFIWLG…IIQEEFYFNF (177 aa)). Substrate is bound by residues 75 to 82 (RGGEVTCH), 142 to 144 (SIG), and 155 to 157 (GFS). The Acyl-thioester intermediate role is filled by cysteine 173.

The protein belongs to the LipB family.

It is found in the cytoplasm. It catalyses the reaction octanoyl-[ACP] + L-lysyl-[protein] = N(6)-octanoyl-L-lysyl-[protein] + holo-[ACP] + H(+). It functions in the pathway protein modification; protein lipoylation via endogenous pathway; protein N(6)-(lipoyl)lysine from octanoyl-[acyl-carrier-protein]: step 1/2. Catalyzes the transfer of endogenously produced octanoic acid from octanoyl-acyl-carrier-protein onto the lipoyl domains of lipoate-dependent enzymes. Lipoyl-ACP can also act as a substrate although octanoyl-ACP is likely to be the physiological substrate. This is Octanoyltransferase from Prochlorococcus marinus (strain MIT 9515).